The following is an 83-amino-acid chain: Cell division topological specificity factor (83 aa).

Belongs to the MinE family.

In terms of biological role, prevents the cell division inhibition by proteins MinC and MinD at internal division sites while permitting inhibition at polar sites. This ensures cell division at the proper site by restricting the formation of a division septum at the midpoint of the long axis of the cell. The sequence is that of Cell division topological specificity factor from Acidithiobacillus ferrooxidans (strain ATCC 23270 / DSM 14882 / CIP 104768 / NCIMB 8455) (Ferrobacillus ferrooxidans (strain ATCC 23270)).